The sequence spans 512 residues: AMP phosphorylase (512 aa).

AMP-binding positions include Gly166, 192-197, and Thr201; that span reads SRAITG. Residue Asp254 is the Proton donor of the active site. AMP contacts are provided by Ser262 and Lys286.

It belongs to the thymidine/pyrimidine-nucleoside phosphorylase family. Type 2 subfamily.

The enzyme catalyses AMP + phosphate = alpha-D-ribose 1,5-bisphosphate + adenine. It catalyses the reaction CMP + phosphate = cytosine + alpha-D-ribose 1,5-bisphosphate. It carries out the reaction UMP + phosphate = alpha-D-ribose 1,5-bisphosphate + uracil. Catalyzes the conversion of AMP and phosphate to adenine and ribose 1,5-bisphosphate (R15P). Exhibits phosphorylase activity toward CMP and UMP in addition to AMP. Functions in an archaeal AMP degradation pathway, together with R15P isomerase and RubisCO. The chain is AMP phosphorylase from Methanothrix thermoacetophila (strain DSM 6194 / JCM 14653 / NBRC 101360 / PT) (Methanosaeta thermophila).